The chain runs to 504 residues: UDP-N-acetylmuramoylalanine--D-glutamate ligase (504 aa).

129-135 is an ATP binding site; sequence GTNGKTT.

Belongs to the MurCDEF family.

The protein resides in the cytoplasm. It catalyses the reaction UDP-N-acetyl-alpha-D-muramoyl-L-alanine + D-glutamate + ATP = UDP-N-acetyl-alpha-D-muramoyl-L-alanyl-D-glutamate + ADP + phosphate + H(+). Its pathway is cell wall biogenesis; peptidoglycan biosynthesis. Its function is as follows. Cell wall formation. Catalyzes the addition of glutamate to the nucleotide precursor UDP-N-acetylmuramoyl-L-alanine (UMA). The chain is UDP-N-acetylmuramoylalanine--D-glutamate ligase from Cupriavidus metallidurans (strain ATCC 43123 / DSM 2839 / NBRC 102507 / CH34) (Ralstonia metallidurans).